A 7570-amino-acid chain; its full sequence is Dystonin (7570 aa).

2 consecutive Calponin-homology (CH) domains span residues 35-138 (KVQK…LHFQ) and 151-255 (MSAK…DAFP). The interval 35-252 (KVQKKTFTKW…VITYVSSLYD (218 aa)) is actin-binding. Leucine 135, lysine 184, serine 236, and serine 237 each carry phosphoserine. 2 Spectrin repeats span residues 602 to 699 (EINM…RHLD) and 701 to 802 (LHNF…QHIK). An SH3 domain is found at 887 to 944 (KTSIPIKAICDYRQIEITIYKDDECVLANNSHRAKWKVISPTGNEAMVPSVCFTVPPP). 2 Spectrin repeats span residues 1293 to 1422 (KYYR…KFAG) and 1440 to 1540 (KEHV…QESQ). A Phosphoserine modification is found at serine 1382. The Nuclear localization signal; in isoform 6 signature appears at 1383–1389 (PVKRRRM). Position 1565 is a phosphoserine (glutamate 1565). Plectin repeat units follow at residues 1584-1626 (IRLL…QLKE), 1660-1703 (KVLE…LERQ), 1774-1817 (RLLS…LTYQ), 1818-1855 (VQTG…LEAQ), and 1856-1891 (RGYV…KILN). Phosphoserine is present on serine 2229. Disordered stretches follow at residues 2317-2346 (SNTS…IEEY), 2383-2441 (LLND…DETA), and 2585-2616 (DYIY…GKPR). Residues 2336–2345 (DKEDESEIEE) show a composition bias toward acidic residues. The segment covering 2385 to 2394 (NDQQNNTGTD) has biased composition (low complexity). Acidic residues-rich tracts occupy residues 2395-2412 (TDSD…DDDH), 2430-2439 (YDTLQEENDE), and 2591-2605 (NDQD…DEEG). Residue serine 2919 is modified to Phosphoserine. The segment at 3190–3221 (EASTVPSDSQMSDSSGVSPMTNSSELKPESRD) is disordered. A compositionally biased stretch (low complexity) spans 3192–3209 (STVPSDSQMSDSSGVSPM). 28 Spectrin repeats span residues 3395–3501 (LQHT…KQIM), 3643–3752 (QEYK…KELD), 3926–4040 (EKFD…NNLK), 4047–4153 (QHYE…EKLQ), 4160–4259 (LSVQ…ETLA), 4269–4368 (ELFE…EAVT), 4516–4621 (QKAQ…QKLE), 4628–4732 (TQFQ…DWID), 4742–4842 (QSLL…QHLQ), 4849–4951 (HQFQ…NKLK), 4958–5058 (LKYK…FCLE), 5068–5167 (QEVS…SFLE), 5174–5277 (GHFQ…EQVE), 5284–5388 (EEFY…AQLQ), 5395–5497 (GRFQ…RQLE), 5504–5715 (QQFH…KTLE), 5831–5933 (QQFD…LQLE), 5941–6041 (QFWE…VALD), 6048–6154 (TQFH…AKLL), 6161–6263 (EKFW…DKLE), 6270–6373 (VQYQ…HKLE), 6380–6482 (GQFQ…QQLD), 6489–6591 (KGFH…TKLE), 6598–6700 (MEFH…RSLD), 6707–6810 (KQFH…NKLE), 6817–6918 (GQFT…TRLE), 6925–7027 (EEFH…QRLA), and 7037–7167 (QELL…RKLN). At serine 3968 the chain carries Phosphoserine. Serine 4749 carries the post-translational modification Phosphoserine. Lysine 5470 participates in a covalent cross-link: Glycyl lysine isopeptide (Lys-Gly) (interchain with G-Cter in ubiquitin). EF-hand domains lie at 7197–7232 (HKKS…SKFP) and 7233–7268 (TSRL…NKDA). Residues aspartate 7210, aspartate 7212, aspartate 7214, lysine 7216, glutamate 7221, aspartate 7246, aspartate 7248, aspartate 7250, tyrosine 7252, and glutamate 7257 each contribute to the Ca(2+) site. The 79-residue stretch at 7273-7351 (TDADKIEDEV…EFLVKNDPCR (79 aa)) folds into the GAR domain. Disordered regions lie at residues 7358–7379 (KMLR…AKGR), 7395–7452 (SQGM…SKLR), and 7481–7570 (QFAD…SSKR). Over residues 7362–7374 (SESNSSITTTQPT) the composition is skewed to polar residues. Composition is skewed to low complexity over residues 7411-7441 (SSRG…TTTP) and 7490-7504 (SRPG…GSRA). Serine 7432 bears the Phosphoserine mark. Phosphoserine is present on residues serine 7510, serine 7513, and serine 7525. Over residues 7519–7535 (EIQSVCSDVETVPQTHR) the composition is skewed to polar residues. Positions 7550–7553 (SKIP) match the Microtubule tip localization signal motif.

As to quaternary structure, homodimer. Isoform 1 interacts (via N-terminus) with PLEC (via N-terminus). Interacts with the neuronal intermediate filament protein, PRPH. Interacts with DES. Interacts with SYNE3. Isoform 1 and isoform 6 can homodimerize (via N-terminus). Isoform 1 interacts (via N-terminus) with ACTN2. Isoform 1 interacts (via N-terminus) with PLEC (via N-terminus). Isoform 3 interacts (via N-terminus) with COL17A1 (via cytoplasmic region). Isoform 3 interacts (via N-terminus) with ITGB4 isoform beta-4a (via cytoplasmic region). Isoform 3 interacts (via N-terminus) with ERBIN (via C-terminus). Isoform 3 associates (via C-terminal) with KRT5-KRT14 (via rod region) intermediate filaments of keratins. Interacts with MAPRE1; probably required for targeting to the growing microtubule plus ends. Interacts with TMIGD2. Isoform 9 interacts with TMEM108. As to expression, isoform 1 is expressed in myoblasts (at protein level). Isoform 3 is expressed in the skin. Isoform 6 is expressed in the brain. Highly expressed in skeletal muscle and cultured keratinocytes.

The protein resides in the cytoplasm. It localises to the cytoskeleton. The protein localises to the stress fiber. It is found in the cell projection. Its subcellular location is the axon. The protein resides in the myofibril. It localises to the sarcomere. The protein localises to the z line. It is found in the h zone. Its subcellular location is the cell junction. The protein resides in the hemidesmosome. It localises to the nucleus. The protein localises to the nucleus envelope. It is found in the membrane. Its subcellular location is the endoplasmic reticulum membrane. The protein resides in the cell cortex. It localises to the cell membrane. Cytoskeletal linker protein. Acts as an integrator of intermediate filaments, actin and microtubule cytoskeleton networks. Required for anchoring either intermediate filaments to the actin cytoskeleton in neural and muscle cells or keratin-containing intermediate filaments to hemidesmosomes in epithelial cells. The proteins may self-aggregate to form filaments or a two-dimensional mesh. Regulates the organization and stability of the microtubule network of sensory neurons to allow axonal transport. Mediates docking of the dynein/dynactin motor complex to vesicle cargos for retrograde axonal transport through its interaction with TMEM108 and DCTN1. Functionally, plays a structural role in the assembly of hemidesmosomes of epithelial cells; anchors keratin-containing intermediate filaments to the inner plaque of hemidesmosomes. Required for the regulation of keratinocyte polarity and motility; mediates integrin ITGB4 regulation of RAC1 activity. In terms of biological role, required for bundling actin filaments around the nucleus. Its function is as follows. Regulates the organization and stability of the microtubule network of sensory neurons to allow axonal transport. The polypeptide is Dystonin (Homo sapiens (Human)).